The following is a 344-amino-acid chain: L-rhamnose-proton symporter (344 aa).

Helical transmembrane passes span 4–24 (AITM…CFYA), 38–58 (WSVG…ALLL), 68–88 (FSLS…IGNI), 101–121 (MGIG…TPII), 137–157 (TLLG…AGQL), 175–195 (LVLA…MNAA), 214–234 (LPSY…FCFI), 259–279 (VLLS…YAWG), 290–310 (ISWM…GLVL), and 323–343 (VLSL…IGMA).

It belongs to the L-rhamnose transporter (TC 2.A.7.6) family.

Its subcellular location is the cell inner membrane. It carries out the reaction L-rhamnopyranose(in) + H(+)(in) = L-rhamnopyranose(out) + H(+)(out). Functionally, uptake of L-rhamnose across the cytoplasmic membrane with the concomitant transport of protons into the cell (symport system). The protein is L-rhamnose-proton symporter of Shigella sonnei (strain Ss046).